A 357-amino-acid chain; its full sequence is Aspartate-semialdehyde dehydrogenase (357 aa).

NADP(+) is bound by residues Thr-12, Gly-13, Thr-14, Val-15, Ser-37, Ser-40, Leu-84, and Asp-85. The active-site Acyl-thioester intermediate is Cys-151. Gly-183 lines the NADP(+) pocket. The active-site Proton acceptor is His-247. Ser-323 is subject to Phosphoserine. Asn-335 is a binding site for NADP(+).

This sequence belongs to the aspartate-semialdehyde dehydrogenase family.

It localises to the cytoplasm. Its subcellular location is the cytosol. It is found in the nucleus. It carries out the reaction L-aspartate 4-semialdehyde + phosphate + NADP(+) = 4-phospho-L-aspartate + NADPH + H(+). Its pathway is amino-acid biosynthesis; L-methionine biosynthesis via de novo pathway; L-homoserine from L-aspartate: step 2/3. It participates in amino-acid biosynthesis; L-threonine biosynthesis; L-threonine from L-aspartate: step 2/5. Catalyzes the NADPH-dependent formation of L-aspartate 4-semialdehyde (L-ASA) by the reductive dephosphorylation of 4-phospho-L-aspartate. Mediates the second step in the biosynthesis of amino acids that derive from aspartate (the aspartate family of amino acids), including methioinine and threonine, the latter of which is a precursor to isoleucine. This is Aspartate-semialdehyde dehydrogenase from Schizosaccharomyces pombe (strain 972 / ATCC 24843) (Fission yeast).